Consider the following 184-residue polypeptide: Photosystem I assembly protein Ycf4 (184 aa).

The next 2 membrane-spanning stretches (helical) occupy residues 22–42 (FCWAIILFLGSLGFLLIGISS) and 57–77 (ILFFPQGIVMSFYGLAGLFIS).

This sequence belongs to the Ycf4 family.

The protein localises to the plastid. It localises to the chloroplast thylakoid membrane. Seems to be required for the assembly of the photosystem I complex. The polypeptide is Photosystem I assembly protein Ycf4 (Populus trichocarpa (Western balsam poplar)).